The sequence spans 45 residues: MSDKPDLSEVEKFDRSKLKKTNTEEKNTLPSKETIQQEKECVQTS.

2 stretches are compositionally biased toward basic and acidic residues: residues 1–27 (MSDK…EEKN) and 35–45 (IQQEKECVQTS). A disordered region spans residues 1 to 45 (MSDKPDLSEVEKFDRSKLKKTNTEEKNTLPSKETIQQEKECVQTS).

This sequence belongs to the thymosin beta family. In terms of tissue distribution, neuroblastoma-specific.

It is found in the cytoplasm. It localises to the cytoskeleton. Functionally, plays an important role in the organization of the cytoskeleton. Binds to and sequesters actin monomers (G actin) and therefore inhibits actin polymerization. The chain is Thymosin beta-15A (TMSB15A) from Homo sapiens (Human).